We begin with the raw amino-acid sequence, 219 residues long: Small ribosomal subunit protein uS3 (219 aa).

The region spanning 38–107 (IREYIENKMK…RVHINVVEVK (70 aa)) is the KH type-2 domain.

This sequence belongs to the universal ribosomal protein uS3 family. As to quaternary structure, part of the 30S ribosomal subunit. Forms a tight complex with proteins S10 and S14.

Functionally, binds the lower part of the 30S subunit head. Binds mRNA in the 70S ribosome, positioning it for translation. This chain is Small ribosomal subunit protein uS3, found in Exiguobacterium sp. (strain ATCC BAA-1283 / AT1b).